A 484-amino-acid chain; its full sequence is Cytochrome P450 monooxygenase poxD (484 aa).

A helical membrane pass occupies residues Val-2–Ser-24. Position 429 (Cys-429) interacts with heme.

It belongs to the cytochrome P450 family. The cofactor is heme.

The protein resides in the membrane. It participates in secondary metabolite biosynthesis. In terms of biological role, cytochrome P450 monooxygenase; part of the gene cluster that mediates the biosynthesis of oxaleimides, cytotoxic compounds containing an unusual disubstituted succinimide moiety. The first step of the pathway is provided by the HR-PKS poxF that serves in a new mode of collaborative biosynthesis with the PKS-NRPS poxE, by providing the olefin containing amino acid substrate via the synthesis of an ACP-bound dec-4-enoate. The cytochrome P450 monooxygenase poxM-catalyzed oxidation at the alpha-position creates the enzyme-bound 2-hydroxydec-4-enoyl-ACP thioester, which may be prone to spontaneous hydrolysis to yield 2-hydroxydec-4-enoic acid due to increased electrophilicity of the carbonyl. 2-hydroxydec-4-enoic acid can then be further oxidized by poxM to yield the alpha-ketoacid 2-oxodec-4-enoicacid, which is reductively aminated by the aminotransferase poxL to yield (S,E)-2-aminodec-4-enoic acid. The Hybrid PKS-NRPS synthetase poxE then performs condensation between the octaketide product of its PKS modules and the amino group of (S,E)-2-aminodec-4-enoic acid which is activated and incorporated by the adenylation domain. The resulting aminoacyl product can be cyclized by the Diels-Alderase PoxQ and reductively released by the reductive (R) domain of poxE to yield an aldehyde intermediate. The released aldehyde is then substrate for a Knoevenagel condensation by the hydrolyase poxO followed by an oxidation at the 5-position of the pyrrolidone ring. The presence of the olefin from the amino acid building block allows for migration of the substituted allyl group to occur. This allylic transposition reaction takes place in a conjugate addition, semipinacol-like fashion to yield a succinimide intermediate. Iterative two-electron oxidations of the C7 methyl of the succinimide intermediate to the carboxylic acid can be catalyzed by one of two remaining cytochrome P450 monooxygenasess poxC or poxD to yield oxaleimide A. Subsequent oxidation yields the maleimide scaffold oxaleimide I. Both oxaleimide A and oxaleimide I can undergo oxidative modifications in the decalin ring to yield the series of products oxaleimides B to H. This is Cytochrome P450 monooxygenase poxD from Penicillium oxalicum.